We begin with the raw amino-acid sequence, 110 residues long: Iron-sulfur cluster insertion protein ErpA (110 aa).

Cys38, Cys102, and Cys104 together coordinate iron-sulfur cluster.

The protein belongs to the HesB/IscA family. As to quaternary structure, homodimer. Iron-sulfur cluster serves as cofactor.

Functionally, required for insertion of 4Fe-4S clusters for at least IspG. In Marinobacter nauticus (strain ATCC 700491 / DSM 11845 / VT8) (Marinobacter aquaeolei), this protein is Iron-sulfur cluster insertion protein ErpA.